The following is a 446-amino-acid chain: Solute carrier family 52, riboflavin transporter, member 2 (446 aa).

4 consecutive transmembrane segments (helical) span residues 14–34 (LLVA…WVEL), 47–67 (LPSY…VVTL), 79–99 (APIQ…APLW), and 104–124 (VMAG…LALA). An N-linked (GlcNAc...) asparagine glycan is attached at Asn129. The next 2 membrane-spanning stretches (helical) occupy residues 147 to 167 (FFLG…GQGV) and 196 to 216 (FFGA…GLLL). Positions 228 to 267 (GSGTGLRGGAPGVEEEEEEEASPLQEPPSQAAGNTPSPDP) are disordered. The segment covering 229 to 238 (SGTGLRGGAP) has biased composition (gly residues). Over residues 254–263 (PPSQAAGNTP) the composition is skewed to polar residues. 5 helical membrane-spanning segments follow: residues 278–298 (ACLL…LPAV), 313–333 (LAVV…MGIL), 340–360 (LGGL…LAIL), 367–387 (VGTS…LGVF), and 405–425 (ALLA…VTMF).

This sequence belongs to the riboflavin transporter family.

The protein resides in the cell membrane. It catalyses the reaction riboflavin(in) = riboflavin(out). Its activity is regulated as follows. Riboflavin transport is Na(+)-independent but moderately pH-sensitive. Activity is strongly inhibited by riboflavin analogs, such as lumiflavin. Weakly inhibited by flavin adenine dinucleotide (FAD) and flavin mononucleotide (FMN). Plasma membrane transporter mediating the uptake by cells of the water soluble vitamin B2/riboflavin that plays a key role in biochemical oxidation-reduction reactions of the carbohydrate, lipid, and amino acid metabolism. May also act as a receptor for 4-hydroxybutyrate. Functionally, (Microbial infection) In case of infection by porcine endogenous retrovirus (PERV-A), acts as a cell receptor to retroviral envelopes. In Sus scrofa (Pig), this protein is Solute carrier family 52, riboflavin transporter, member 2 (SLC52A2).